Consider the following 184-residue polypeptide: GTP-binding protein Rheb (184 aa).

Lysine 8 participates in a covalent cross-link: Glycyl lysine isopeptide (Lys-Gly) (interchain with G-Cter in ubiquitin). Serine 16 and valine 17 together coordinate GDP. GTP is bound at residue serine 16. Residues glycine 18, lysine 19, serine 20, serine 21, valine 32, tyrosine 35, threonine 38, asparagine 119, and aspartate 122 each coordinate GTP. GDP contacts are provided by lysine 19, serine 20, and serine 21. Serine 20 is a binding site for Mg(2+). The short motif at 35 to 43 is the Effector region element; that stretch reads YDPTIENTF. Threonine 38 contributes to the GDP binding site. Mg(2+) is bound at residue threonine 38. Residue aspartate 122 participates in GDP binding. Phosphoserine; by MAPKAPK5 is present on serine 130. Alanine 150 lines the GDP pocket. Alanine 150 contributes to the GTP binding site. Cysteine 181 is modified (cysteine methyl ester). The S-farnesyl cysteine moiety is linked to residue cysteine 181. Residues 182–184 constitute a propeptide, removed in mature form; the sequence is SVM.

It belongs to the small GTPase superfamily. Rheb family. Associates with the mTORC1 complex (MTOR, MLST8 and RPTOR) in a guanyl nucleotide-independent manner. Interacts with TSC2. Interacts with MCRS1; the interaction maintains RHEB at the lysosome in its active GTP-bound form and prevents its interaction with the mTORC1 complex inhibitor TSC2, ensuring activation of the mTORC1 complex by RHEB. Interacts (when prenylated) with PDE6D; this promotes release from membranes. In terms of processing, farnesylation is important for efficiently activating mTORC1-mediated signaling. Post-translationally, polyubiquitinated in response to amino acid, promoting its interaction with MTOR and mTORC1 activation. Deubiquitination by ATXN3 promotes recruitment of the TSC-TBC complex and RHEB inactivation by TSC2. Monoubiquitinated at Lys-8 by RNF152, promoting its association with the TSC-TBC complex. Deubiquitinated at Lys-8 by USP4, promoting mTORC1 activation. Phosphorylation by MAPKAPK5 impairs GTP-binding and inactivation. In terms of tissue distribution, expressed at high levels in normal adult cortex as well as a number of peripheral tissues, including lung and intestine.

Its subcellular location is the endomembrane system. The protein resides in the lysosome membrane. It is found in the golgi apparatus membrane. The protein localises to the endoplasmic reticulum membrane. It localises to the cytoplasm. Its subcellular location is the cytosol. It carries out the reaction GTP + H2O = GDP + phosphate + H(+). Its activity is regulated as follows. Alternates between an inactive form bound to GDP and an active form bound to GTP. Inactivated by the TSC-TBC complex via the GTPase activating protein (GAP) domain of TSC2. Autoinhibited by Tyr-35, which constrains the active site conformation, restricting the access of the catalytic Asp-65 to the nucleotide-binding pocket. Its function is as follows. Small GTPase that acts as an allosteric activator of the canonical mTORC1 complex, an evolutionarily conserved central nutrient sensor that stimulates anabolic reactions and macromolecule biosynthesis to promote cellular biomass generation and growth. In response to nutrients, growth factors or amino acids, specifically activates the protein kinase activity of MTOR, the catalytic component of the mTORC1 complex: acts by causing a conformational change that allows the alignment of residues in the active site of MTOR, thereby enhancing the phosphorylation of ribosomal protein S6 kinase (RPS6KB1 and RPS6KB2) and EIF4EBP1 (4E-BP1). RHEB is also required for localization of the TSC-TBC complex to lysosomal membranes. In response to starvation, RHEB is inactivated by the TSC-TBC complex, preventing activation of mTORC1. Has low intrinsic GTPase activity. In Rattus norvegicus (Rat), this protein is GTP-binding protein Rheb.